The primary structure comprises 187 residues: UPF0398 protein LJ_1195 (187 aa).

This sequence belongs to the UPF0398 family.

The protein is UPF0398 protein LJ_1195 of Lactobacillus johnsonii (strain CNCM I-12250 / La1 / NCC 533).